The primary structure comprises 418 residues: Isocitrate dehydrogenase [NADP] (418 aa).

T106 serves as a coordination point for NADP(+). Residues S115, N117, R121, R131, and R155 each contribute to the D-threo-isocitrate site. S115 carries the phosphoserine modification. Residue T193 is modified to Phosphothreonine. Mg(2+) is bound at residue D309. NADP(+)-binding positions include 341 to 347, N354, Y393, and R397; that span reads HGTAPKY.

This sequence belongs to the isocitrate and isopropylmalate dehydrogenases family. As to quaternary structure, homodimer. Requires Mg(2+) as cofactor. It depends on Mn(2+) as a cofactor.

It localises to the secreted. The enzyme catalyses D-threo-isocitrate + NADP(+) = 2-oxoglutarate + CO2 + NADPH. Catalyzes the oxidative decarboxylation of isocitrate to 2-oxoglutarate and carbon dioxide with the concomitant reduction of NADP(+). This Pseudomonas aeruginosa (strain UCBPP-PA14) protein is Isocitrate dehydrogenase [NADP] (icd).